Reading from the N-terminus, the 277-residue chain is tRNA pseudouridine synthase B (277 aa).

The Nucleophile role is filled by Asp-38.

The protein belongs to the pseudouridine synthase TruB family. Type 1 subfamily.

The catalysed reaction is uridine(55) in tRNA = pseudouridine(55) in tRNA. Functionally, responsible for synthesis of pseudouridine from uracil-55 in the psi GC loop of transfer RNAs. This Sulfurovum sp. (strain NBC37-1) protein is tRNA pseudouridine synthase B.